We begin with the raw amino-acid sequence, 555 residues long: MFKLLIPNKYNYVIRPLVRFKSIKSPKSPKPKPTAKLSPNVFSSGKFSQLHNDTSTTNIESKITSFDQLKIFPSVREAMIKEIKSQYNLKGPRHSNIDEIDIKPTPVQIAAIRKINQTRKLKVPNKDLEGMDDAERIQFELQNANEIQKTKVFTVAAETGSGKTWSYLAPLLSKLKSDDMEFWKSDPEGYDNTRKKGQFVKSVILLPTNELVDQVYETLQRANSFELDHKGAPGNFTSFLELPENKTMNITTMKLGQGEAPVRLFRQLETKGPIDVLITTPGKIVAFSKLVNINRPFRVFANVKYCVLDEADTLFDDSFEKNTTDVITHFPKLLDLILVSATIPKVFEKKLSKLFPDQRSLIRVATPSLHKVPRNIKVMTIDADVAPYNGSKPRCLAQALYAISKDGTEPGYVKRIIVFVNEKSEVDGIVESMITKYKVRPEDIVGVSGSVNIRDRKDMLQPFLQPAELIENDDFGSKVKILVTTDLLARGLNFQGVKNVILLGLPRNSVDLVHRLGRTGRMNQNGRVFVIVDKKSKKSWVKGLGNAIIRGLRIG.

Residues 1–25 (MFKLLIPNKYNYVIRPLVRFKSIKS) constitute a mitochondrion transit peptide. The Q motif motif lies at 101–108 (DIKPTPVQ). In terms of domain architecture, Helicase ATP-binding spans 144 to 361 (ANEIQKTKVF…SKLFPDQRSL (218 aa)). ATP is bound at residue 157 to 164 (AETGSGKT). The DEAD box signature appears at 309-312 (DEAD). The region spanning 395 to 555 (CLAQALYAIS…NAIIRGLRIG (161 aa)) is the Helicase C-terminal domain.

It belongs to the DEAD box helicase family. MRH4 subfamily.

Its subcellular location is the mitochondrion. It carries out the reaction ATP + H2O = ADP + phosphate + H(+). ATP-binding RNA helicase involved in mitochondrial RNA metabolism. Required for maintenance of mitochondrial DNA. This chain is ATP-dependent RNA helicase MRH4, mitochondrial (MRH4), found in Candida albicans (strain SC5314 / ATCC MYA-2876) (Yeast).